The chain runs to 227 residues: Probable septum site-determining protein MinC (227 aa).

It belongs to the MinC family. As to quaternary structure, interacts with MinD and FtsZ.

Functionally, cell division inhibitor that blocks the formation of polar Z ring septums. Rapidly oscillates between the poles of the cell to destabilize FtsZ filaments that have formed before they mature into polar Z rings. Prevents FtsZ polymerization. This chain is Probable septum site-determining protein MinC, found in Clostridioides difficile (strain 630) (Peptoclostridium difficile).